A 305-amino-acid chain; its full sequence is Sulfate adenylyltransferase subunit 2 (305 aa).

Belongs to the PAPS reductase family. CysD subfamily. In terms of assembly, heterodimer composed of CysD, the smaller subunit, and CysN.

The enzyme catalyses sulfate + ATP + H(+) = adenosine 5'-phosphosulfate + diphosphate. Its pathway is sulfur metabolism; hydrogen sulfide biosynthesis; sulfite from sulfate: step 1/3. Functionally, with CysN forms the ATP sulfurylase (ATPS) that catalyzes the adenylation of sulfate producing adenosine 5'-phosphosulfate (APS) and diphosphate, the first enzymatic step in sulfur assimilation pathway. APS synthesis involves the formation of a high-energy phosphoric-sulfuric acid anhydride bond driven by GTP hydrolysis by CysN coupled to ATP hydrolysis by CysD. The sequence is that of Sulfate adenylyltransferase subunit 2 from Stutzerimonas stutzeri (strain A1501) (Pseudomonas stutzeri).